The sequence spans 152 residues: 3-hydroxyacyl-[acyl-carrier-protein] dehydratase FabZ (152 aa).

His54 is a catalytic residue.

This sequence belongs to the thioester dehydratase family. FabZ subfamily.

It is found in the cytoplasm. It catalyses the reaction a (3R)-hydroxyacyl-[ACP] = a (2E)-enoyl-[ACP] + H2O. Its function is as follows. Involved in unsaturated fatty acids biosynthesis. Catalyzes the dehydration of short chain beta-hydroxyacyl-ACPs and long chain saturated and unsaturated beta-hydroxyacyl-ACPs. In Shewanella woodyi (strain ATCC 51908 / MS32), this protein is 3-hydroxyacyl-[acyl-carrier-protein] dehydratase FabZ.